A 1384-amino-acid polypeptide reads, in one-letter code: MTSYSFTEKKRIRKDFGKQRSILEVPFLLAIQVDSYREFLQENVDPAKRTDHGLHAALKSVFPIASYSGNAALEYVGYKLGEPVFDERECRQRGMSYGAPLRVTVRLVIYDRESSTKAIKYVKEQEVYLGEIPLMTENGTFIVNGTERVIVSQLHRSPGVFFDHDRGKTHSSGKLLYSARIIPYRGSWLDFEFDPKDALFTRIDRRRKLPVSILLRALGYSNEEMLAEFFEINTFHINPDEGVQLELVPERLRGETLGFDLADGDKVIVEAGKRITARHIKQLEASGIAALAVPDDYIVGRILSHDVVDASTGELLAQANDEITDEQLQAFRKAGVDAVGTLWVNDLDRGPYLSNTLRIDPTKTQLEALVEIYRMMRPGEPPTKDAAQNLFHNLFFTFERYDLSAVGRMKFNRRVGRKETTGEAVLYDRKYYGERNDEESKRLVAAHGDSSDILDVIKVLTEIRNGRGVVDDIDHLGNRRVRSVGEMAENVFRVGLVRVERAVKERLSMAESEGLTPQELINAKPVAAAIKEFFGSSQLSQFMDQNNPLSEVTHKRRVSALGPGGLTRERAGFEVRDVHPTHYGRVCTIETPEGPNIGLINSLAVYARTNQYGFLETPYRKVVDGKVYDEVEFLSAIEENEYVIAQANALTNADSVLTEQFVPCRFQGESLLKPPAEVHFMDVSPMQTVSIAAALVPFLEHDDANRALMGANMQRQAVPTLRAQKPLVGTGIERAVARDSGVTVNARRGGEIVQIDAARIVVKVVEEEIVGATDAGVDIYNLVKYTRSNQNTCINQRPLVQVGDIIARGDVLADGPSTDIGELALGQNMLIAFMPWNGYNFEDSILLSERVVEEDRYTTIHIEELTCVARDTKLGPEEISADIPNVSEQALNRLDESGVVYIGAEVRAGDIMVGKVTPKGESQLTPEEKLLRAIFGEKASDVKDSSLRVPPGMDGTVIDVQVFTRDGIEKDKRARQIEESEIKRVKKDFDDQFRILEAAIYMRLRSQIVGKVVNGGAGLKKGDVISDAFLDGLKKADWFALRMKDEDASEAIERAQKQIQAHEKEFERRFADKRGKITAGDDLAPGVLKMVKVFLAVKRRIQPGDKMAGRHGNKGVVSNVVPVEDMPYMASGETVDIVLNPLGVPSRMNIGQILEVHLGWAAKGLGRKIQAMMEAQAAVADLRKFLDDIYNHDDTNVANRVDLSQFSDEELLRLARNLTDGVPMATPVFDGATEAEIKRMLELADLPSSGQTQLYDGRTGEAFDRHTTVGYMHYLKLNHLVDDKMHARSTGPYSLVTQQPLGGKAQFGGQRFGEMEVWALEAYGAAYTLQEMLTVKSDDVQGRNQMYKNIVDGEHEMVAGMPESFNVLVKEIRSLAINMELEDN.

This sequence belongs to the RNA polymerase beta chain family. As to quaternary structure, the RNAP catalytic core consists of 2 alpha, 1 beta, 1 beta' and 1 omega subunit. When a sigma factor is associated with the core the holoenzyme is formed, which can initiate transcription.

It catalyses the reaction RNA(n) + a ribonucleoside 5'-triphosphate = RNA(n+1) + diphosphate. Its function is as follows. DNA-dependent RNA polymerase catalyzes the transcription of DNA into RNA using the four ribonucleoside triphosphates as substrates. This is DNA-directed RNA polymerase subunit beta from Stenotrophomonas maltophilia (strain R551-3).